A 251-amino-acid polypeptide reads, in one-letter code: Ubiquinone/menaquinone biosynthesis C-methyltransferase UbiE (251 aa).

S-adenosyl-L-methionine is bound by residues threonine 74, aspartate 95, 123–124 (NA), and serine 140.

The protein belongs to the class I-like SAM-binding methyltransferase superfamily. MenG/UbiE family.

It catalyses the reaction a 2-demethylmenaquinol + S-adenosyl-L-methionine = a menaquinol + S-adenosyl-L-homocysteine + H(+). The catalysed reaction is a 2-methoxy-6-(all-trans-polyprenyl)benzene-1,4-diol + S-adenosyl-L-methionine = a 5-methoxy-2-methyl-3-(all-trans-polyprenyl)benzene-1,4-diol + S-adenosyl-L-homocysteine + H(+). Its pathway is quinol/quinone metabolism; menaquinone biosynthesis; menaquinol from 1,4-dihydroxy-2-naphthoate: step 2/2. It participates in cofactor biosynthesis; ubiquinone biosynthesis. In terms of biological role, methyltransferase required for the conversion of demethylmenaquinol (DMKH2) to menaquinol (MKH2) and the conversion of 2-polyprenyl-6-methoxy-1,4-benzoquinol (DDMQH2) to 2-polyprenyl-3-methyl-6-methoxy-1,4-benzoquinol (DMQH2). This chain is Ubiquinone/menaquinone biosynthesis C-methyltransferase UbiE, found in Citrobacter koseri (strain ATCC BAA-895 / CDC 4225-83 / SGSC4696).